A 91-amino-acid polypeptide reads, in one-letter code: Large ribosomal subunit protein bL27 (91 aa).

The protein belongs to the bacterial ribosomal protein bL27 family.

The protein is Large ribosomal subunit protein bL27 of Pseudomonas savastanoi pv. phaseolicola (strain 1448A / Race 6) (Pseudomonas syringae pv. phaseolicola (strain 1448A / Race 6)).